Consider the following 205-residue polypeptide: HTH-type transcriptional regulator PksA (205 aa).

Residues 8-68 form the HTH tetR-type domain; the sequence is EKRRKQIAEA…FAMKLVQEKV (61 aa). The H-T-H motif DNA-binding region spans 31 to 50; the sequence is SARNIAKEAGLSLGALRHYF.

In terms of biological role, transcriptional regulation of the polyketide synthase operon. The sequence is that of HTH-type transcriptional regulator PksA (pksA) from Bacillus subtilis (strain 168).